A 288-amino-acid chain; its full sequence is Pyridoxal kinase PdxY (288 aa).

Substrate is bound by residues S10 and 45 to 46; that span reads TQ. ATP is bound by residues D112, A143, E148, and K181. D222 lines the substrate pocket.

It belongs to the pyridoxine kinase family. PdxY subfamily. As to quaternary structure, homodimer. Mg(2+) is required as a cofactor.

It carries out the reaction pyridoxal + ATP = pyridoxal 5'-phosphate + ADP + H(+). It functions in the pathway cofactor metabolism; pyridoxal 5'-phosphate salvage; pyridoxal 5'-phosphate from pyridoxal: step 1/1. In terms of biological role, pyridoxal kinase involved in the salvage pathway of pyridoxal 5'-phosphate (PLP). Catalyzes the phosphorylation of pyridoxal to PLP. This chain is Pyridoxal kinase PdxY, found in Paraburkholderia xenovorans (strain LB400).